Consider the following 470-residue polypeptide: Uronate isomerase (470 aa).

The protein belongs to the metallo-dependent hydrolases superfamily. Uronate isomerase family.

The enzyme catalyses D-glucuronate = D-fructuronate. It catalyses the reaction aldehydo-D-galacturonate = keto-D-tagaturonate. It functions in the pathway carbohydrate metabolism; pentose and glucuronate interconversion. The sequence is that of Uronate isomerase from Klebsiella pneumoniae (strain 342).